Reading from the N-terminus, the 215-residue chain is ATP-dependent Clp protease proteolytic subunit (215 aa).

S116 (nucleophile) is an active-site residue. Residue H141 is part of the active site.

It belongs to the peptidase S14 family. In terms of assembly, fourteen ClpP subunits assemble into 2 heptameric rings which stack back to back to give a disk-like structure with a central cavity, resembling the structure of eukaryotic proteasomes.

The protein resides in the cytoplasm. The catalysed reaction is Hydrolysis of proteins to small peptides in the presence of ATP and magnesium. alpha-casein is the usual test substrate. In the absence of ATP, only oligopeptides shorter than five residues are hydrolyzed (such as succinyl-Leu-Tyr-|-NHMec, and Leu-Tyr-Leu-|-Tyr-Trp, in which cleavage of the -Tyr-|-Leu- and -Tyr-|-Trp bonds also occurs).. Its function is as follows. Cleaves peptides in various proteins in a process that requires ATP hydrolysis. Has a chymotrypsin-like activity. Plays a major role in the degradation of misfolded proteins. This is ATP-dependent Clp protease proteolytic subunit from Psychrobacter cryohalolentis (strain ATCC BAA-1226 / DSM 17306 / VKM B-2378 / K5).